A 231-amino-acid polypeptide reads, in one-letter code: Large ribosomal subunit protein uL1 (231 aa).

This sequence belongs to the universal ribosomal protein uL1 family. As to quaternary structure, part of the 50S ribosomal subunit.

Binds directly to 23S rRNA. The L1 stalk is quite mobile in the ribosome, and is involved in E site tRNA release. In terms of biological role, protein L1 is also a translational repressor protein, it controls the translation of the L11 operon by binding to its mRNA. This chain is Large ribosomal subunit protein uL1, found in Alkalilimnicola ehrlichii (strain ATCC BAA-1101 / DSM 17681 / MLHE-1).